The following is an 806-amino-acid chain: Phenylalanine--tRNA ligase beta subunit (806 aa).

The region spanning 40-155 is the tRNA-binding domain; it reads NKGVKGVVVG…SDAEVGADAL (116 aa). The B5 domain maps to 409–484; it reads VQERTVSVTA…RLYGYDHIPV (76 aa). The Mg(2+) site is built by Asp-462, Asp-468, Glu-471, and Glu-472. Positions 712–805 constitute an FDX-ACB domain; sequence PRFPSMTRDM…VEEKFGAELR (94 aa).

This sequence belongs to the phenylalanyl-tRNA synthetase beta subunit family. Type 1 subfamily. In terms of assembly, tetramer of two alpha and two beta subunits. Mg(2+) serves as cofactor.

The protein localises to the cytoplasm. The enzyme catalyses tRNA(Phe) + L-phenylalanine + ATP = L-phenylalanyl-tRNA(Phe) + AMP + diphosphate + H(+). This Bacillus thuringiensis subsp. konkukian (strain 97-27) protein is Phenylalanine--tRNA ligase beta subunit.